Here is a 92-residue protein sequence, read N- to C-terminus: Probable glutathione transferase (92 aa).

A GST N-terminal domain is found at 1–71; the sequence is RTCPYAQRAR…YLEEAFPDPP (71 aa). The active-site Nucleophile is Cys3. Glutathione-binding positions include Lys30, Val43, and 55–56; that span reads ES.

It belongs to the GST superfamily. Omega family.

The catalysed reaction is RX + glutathione = an S-substituted glutathione + a halide anion + H(+). It carries out the reaction L-dehydroascorbate + 2 glutathione = glutathione disulfide + L-ascorbate. The enzyme catalyses methylarsonate + 2 glutathione + H(+) = methylarsonous acid + glutathione disulfide + H2O. Exhibits glutathione-dependent thiol transferase activity. Has dehydroascorbate reductase activity and may contribute to the recycling of ascorbic acid. Participates in the biotransformation of inorganic arsenic and reduces monomethylarsonic acid (MMA). The sequence is that of Probable glutathione transferase from Aplysia californica (California sea hare).